We begin with the raw amino-acid sequence, 205 residues long: Recombination protein RecR (205 aa).

The segment at 59–74 (CSVCFHLSAEPVCEVC) adopts a C4-type zinc-finger fold. The region spanning 82–181 (GTLCVVADSR…KVTRIAFGLP (100 aa)) is the Toprim domain.

The protein belongs to the RecR family.

Functionally, may play a role in DNA repair. It seems to be involved in an RecBC-independent recombinational process of DNA repair. It may act with RecF and RecO. This chain is Recombination protein RecR, found in Cyanothece sp. (strain PCC 7425 / ATCC 29141).